Consider the following 595-residue polypeptide: MIGKVVVSVASILLIVGVAIGVVAYINKNGDANLSPQMKAVRGICEATSDKASCVKTLEPVKSDDPNKLIKAFMLATRDAITQSSNFTGKTEGNLGSGISPNNKAVLDYCKKVFMYALEDLSTIVEEMGEDLNQIGSKIDQLKQWLTGVYNYQTDCLDDIEEDDLRKTIGEGIASSKILTSNAIDIFHTVVSAMAKLNLKVEDFKNMTGGIFAPSDKGAAPVNKGTPPVADDSPVADPDGPARRLLEDIDETGIPTWVSGADRKLMTKAGRGSNDGGARIRATFVVAKDGSGQFKTVQQAVNACPEKNPGRCIIHIKAGIYREQVIIPKKKNNIFMFGDGARKTVISYNRSVKLSPGTTTSLSGTVQVESEGFMAKWIGFKNTAGPMGHQAVAIRVNGDRAVIFNCRFDGYQDTLYVNNGRQFYRNIVVSGTVDFIFGKSATVIQNSLIVVRKGNKGQFNTVTADGNEKGLAMKIGIVLQNCRIVPDKKLAAERLIVESYLGRPWKKFSTTVIINSEIGDVIRPEGWKIWDGESFHKSCRYVEYNNRGPGAITNRRVNWVKIARSAAEVNDFTVANWLGPINWIQEANVPVTLGL.

The N-terminal stretch at 1 to 24 (MIGKVVVSVASILLIVGVAIGVVA) is a signal peptide. Residues Asn-86 and Asn-206 are each glycosylated (N-linked (GlcNAc...) asparagine). Residues 215 to 239 (SDKGAAPVNKGTPPVADDSPVADPD) form a disordered region. A compositionally biased stretch (low complexity) spans 227 to 239 (PPVADDSPVADPD). An RRLL cleavage motif motif is present at residues 243 to 246 (RRLL). The RKLM cleavage motif signature appears at 263–266 (RKLM). N-linked (GlcNAc...) asparagine glycosylation is present at Asn-349. Thr-360 and Gln-390 together coordinate substrate. Residue Asp-413 is the Proton donor of the active site. Catalysis depends on Asp-434, which acts as the Nucleophile. Substrate contacts are provided by Arg-503 and Trp-505.

The protein in the N-terminal section; belongs to the PMEI family. It in the C-terminal section; belongs to the pectinesterase family. As to quaternary structure, interacts with SBT6.1. As to expression, expressed in pollen grains and pollen tubes.

It is found in the cell membrane. The protein resides in the secreted. It localises to the cell wall. Its subcellular location is the golgi apparatus membrane. The catalysed reaction is [(1-&gt;4)-alpha-D-galacturonosyl methyl ester](n) + n H2O = [(1-&gt;4)-alpha-D-galacturonosyl](n) + n methanol + n H(+). It participates in glycan metabolism; pectin degradation; 2-dehydro-3-deoxy-D-gluconate from pectin: step 1/5. Functionally, acts in the modification of cell walls via demethylesterification of cell wall pectin. Plays an important role in growth of pollen tubes in female floral tissues, possibly via enhancing the interaction between the pollen tube and female floral tissues by modification of the cell walls. May be regulated by MYB80 during anther development and play a role in tapetum and pollen development. The sequence is that of Pectinesterase 5 (PME5) from Arabidopsis thaliana (Mouse-ear cress).